The primary structure comprises 76 residues: Envelope small membrane protein (76 aa).

Topologically, residues 1–16 (MYSFVSEETGTLIVNS) are virion surface. The helical transmembrane segment at 17–37 (VLLFLAFVVFLLVTLAILTAL) threads the bilayer. Over 38–76 (RLCAYCCNIVNVSLVKPTVYVYSRVKNLNSSEGVPDLLV) the chain is Intravirion.

It belongs to the betacoronaviruses E protein family. In terms of assembly, homopentamer. Interacts with membrane protein M in the budding compartment of the host cell, which is located between endoplasmic reticulum and the Golgi complex. Interacts with Nucleoprotein.

It is found in the host Golgi apparatus membrane. Functionally, plays a central role in virus morphogenesis and assembly. Acts as a viroporin and self-assembles in host membranes forming pentameric protein-lipid pores that allow ion transport. Also plays a role in the induction of apoptosis. The chain is Envelope small membrane protein from Rhinolophus sinicus (Chinese rufous horseshoe bat).